A 185-amino-acid polypeptide reads, in one-letter code: Large ribosomal subunit protein uL5 (185 aa).

It belongs to the universal ribosomal protein uL5 family. In terms of assembly, part of the 50S ribosomal subunit; part of the 5S rRNA/L5/L18/L25 subcomplex. Contacts the 5S rRNA and the P site tRNA. Forms a bridge to the 30S subunit in the 70S ribosome.

In terms of biological role, this is one of the proteins that bind and probably mediate the attachment of the 5S RNA into the large ribosomal subunit, where it forms part of the central protuberance. In the 70S ribosome it contacts protein S13 of the 30S subunit (bridge B1b), connecting the 2 subunits; this bridge is implicated in subunit movement. Contacts the P site tRNA; the 5S rRNA and some of its associated proteins might help stabilize positioning of ribosome-bound tRNAs. The sequence is that of Large ribosomal subunit protein uL5 from Streptomyces avermitilis (strain ATCC 31267 / DSM 46492 / JCM 5070 / NBRC 14893 / NCIMB 12804 / NRRL 8165 / MA-4680).